Here is a 393-residue protein sequence, read N- to C-terminus: uncharacterized protein (393 aa).

The Cytoplasmic segment spans residues 1 to 17; the sequence is MVSKDQTSFNKRWTLGL. A helical transmembrane segment spans residues 18–38; sequence LMLGLVIILWVLSSFLINLIF. The Vacuolar portion of the chain corresponds to 39–46; that stretch reads EDDSYRKP. Residues 47–67 traverse the membrane as a helical segment; the sequence is FFITYTNTAAFIFYLFPTAKA. The Cytoplasmic portion of the chain corresponds to 68–132; that stretch reads VVVNYKDTGR…LYETIKLSAE (65 aa). Residue serine 93 is modified to Phosphoserine. A helical membrane pass occupies residues 133–153; it reads FCILWFTANLVTNASLAFTSV. Topologically, residues 154-156 are vacuolar; it reads ASQ. Residues 157 to 176 form a helical membrane-spanning segment; it reads TILSTTSSFFTLFIGAICHV. Residues 177 to 182 lie on the Cytoplasmic side of the membrane; sequence ESLSKS. Residues 183 to 200 form a helical membrane-spanning segment; the sequence is KVLGSFISFVGIIMVTKS. Residues 201-219 lie on the Vacuolar side of the membrane; it reads DSHQRYQRHIADVSGDDND. Residues 220–240 traverse the membrane as a helical segment; the sequence is AVQVLIGNLLALAGAVLYGVY. Residues 241–257 are Cytoplasmic-facing; sequence STLLKREVGDETRVNMK. The helical transmembrane segment at 258–278 threads the bilayer; sequence IFFGFVGLFNLLFLWPSLIVL. The Vacuolar segment spans residues 279–292; sequence DFFGWEPFSLPKDP. The chain crosses the membrane as a helical span at residues 293-313; the sequence is KVVVIIFVNCLITFVSDFCWA. The Cytoplasmic portion of the chain corresponds to 314–321; it reads KAMLLTSP. The helical transmembrane segment at 322–342 threads the bilayer; sequence LTVTVGLSITIPLAMFGDVIF. Residues 343 to 345 lie on the Vacuolar side of the membrane; it reads KHK. Residues 346 to 366 form a helical membrane-spanning segment; sequence TMSALYLFGATLILGSFFIIN. Residues 367–393 lie on the Cytoplasmic side of the membrane; it reads KSSEEEHFENSITASNYESVEVPAANN.

This sequence belongs to the TPT transporter family.

The protein localises to the vacuole membrane. This is an uncharacterized protein from Saccharomyces cerevisiae (strain ATCC 204508 / S288c) (Baker's yeast).